Here is a 643-residue protein sequence, read N- to C-terminus: MSDKSDLKAELERKKQRLAQIREEKKRKEEERKKKEADMQQKKEPVPDDSDLDRKRRETEALLQSIGISPEPPLVQPLHFLTWDTCYFHYLVPTPMSPSSKSVSTPSEAGSQDDLGPLTRTLQWDTDPSVLQLQSDSELGRRLNKLGVSKVTQVDFLPREVVSYSKETQTPLATHQSEEDEEDEEMVEPKVGHDSELENQDKKQETKEAPPRELTEEEKQQILHSEEFLIFFDRTIRVIERALAEDSDIFFDYSGRELEEKDGDVQAGANLSFNRQFYDEHWSKHRVVTCMDWSLQYPELMVASYSNNEDAPHEPDGVALVWNMKFKKTTPEYVFHCQSSVMSVCFARFHPNLVVGGTYSGQIVLWDNRSHRRTPVQRTPLSAAAHTHPVYCVNVVGTQNAHNLITVSTDGKMCSWSLDMLSTPQESMELVYNKSKPVAVTGMAFPTGDVNNFVVGSEEGTVYTACRHGSKAGIGEVFEGHQGPVTGINCHMAVGPIDFSHLFVTSSFDWTVKLWTTKHNKPLYSFEDNADYVYDVMWSPVHPALFACVDGMGRLDLWNLNSDTEVPTASVAIEGAYALNRVRWAQGGKEVAVGDSEGRIWIYDVGELAVPHNDEWTRFARTLVEIRANRADSEEEGAVELAA.

Basic and acidic residues-rich tracts occupy residues M1–R13 and Q20–E60. Disordered stretches follow at residues M1 to S65 and M96 to Q123. N-acetylserine is present on S2. Residues S2 to Q123 are interaction with DCTN1. S50 and S100 each carry phosphoserine. A compositionally biased stretch (low complexity) spans M96–S107. Position 105 is a phosphothreonine (T105). Phosphoserine is present on residues S107 and S111. The segment at K145–V161 is interaction with DYNLT1. The segment at E167–K219 is disordered. T174 is subject to Phosphothreonine. Residues S177 and S195 each carry the phosphoserine modification. Over residues V187–K219 the composition is skewed to basic and acidic residues. 7 WD repeats span residues S283–E332, H336–V376, A385–E426, S435–G475, G480–S525, D528–T568, and E574–N613. A Phosphoserine modification is found at S633.

It belongs to the dynein intermediate chain family. Homodimer. The cytoplasmic dynein 1 complex consists of two catalytic heavy chains (HCs) and a number of non-catalytic subunits presented by intermediate chains (ICs), light intermediate chains (LICs) and light chains (LCs); the composition seems to vary in respect to the IC, LIC and LC composition. The heavy chain homodimer serves as a scaffold for the probable homodimeric assembly of the respective non-catalytic subunits. The ICs and LICs bind directly to the HC dimer and the LCs assemble on the IC dimer. Isoform 1, isoform 2 and isoform 3 interact with DYNC1H1. Isoform 1, isoform 2 and isoform 3 interact with DYNLT3. Isoform 1, isoform 2 and isoform 3 interact with DYNLT1. Interacts with DCTN1. Interacts with MCRS1; the interaction is required for the proper distribution of centriolar satellites. As to expression, high levels seen in the brain and testis, while a lower level expression is seen in the liver, spleen, kidney, lung, skeletal muscle and heart.

It is found in the cytoplasm. The protein localises to the chromosome. The protein resides in the centromere. It localises to the kinetochore. Its subcellular location is the cytoskeleton. It is found in the spindle pole. Acts as one of several non-catalytic accessory components of the cytoplasmic dynein 1 complex that are thought to be involved in linking dynein to cargos and to adapter proteins that regulate dynein function. Cytoplasmic dynein 1 acts as a motor for the intracellular retrograde motility of vesicles and organelles along microtubules. The intermediate chains mediate the binding of dynein to dynactin via its 150 kDa component (p150-glued) DCTN1. May play a role in mediating the interaction of cytoplasmic dynein with membranous organelles and kinetochores. The sequence is that of Cytoplasmic dynein 1 intermediate chain 1 (Dync1i1) from Rattus norvegicus (Rat).